We begin with the raw amino-acid sequence, 202 residues long: Ribonuclease HII (202 aa).

Positions 14 to 202 (LPLAGVDEAG…VAQFSLFPAA (189 aa)) constitute an RNase H type-2 domain. 3 residues coordinate a divalent metal cation: Asp-20, Glu-21, and Asp-111.

It belongs to the RNase HII family. The cofactor is Mn(2+). Mg(2+) serves as cofactor.

Its subcellular location is the cytoplasm. It catalyses the reaction Endonucleolytic cleavage to 5'-phosphomonoester.. Functionally, endonuclease that specifically degrades the RNA of RNA-DNA hybrids. This is Ribonuclease HII from Rhizorhabdus wittichii (strain DSM 6014 / CCUG 31198 / JCM 15750 / NBRC 105917 / EY 4224 / RW1) (Sphingomonas wittichii).